We begin with the raw amino-acid sequence, 986 residues long: Zinc finger protein 445 (986 aa).

Residues 52 to 134 (RQLFRQLRYH…ALLEELQRDL (83 aa)) enclose the SCAN box domain. The 71-residue stretch at 219–289 (LTFQDVEVTF…NICTVQLKRD (71 aa)) folds into the KRAB domain. Glycyl lysine isopeptide (Lys-Gly) (interchain with G-Cter in SUMO2) cross-links involve residues Lys-302, Lys-360, and Lys-385. Positions 433–460 (QNTGLKENGKDRYGETSRKSWHAHPEHR) are disordered. Basic and acidic residues predominate over residues 439–460 (ENGKDRYGETSRKSWHAHPEHR). C2H2-type zinc fingers lie at residues 470–492 (FQCR…EKIH) and 498–520 (YQCS…QKTH). Residue Lys-524 forms a Glycyl lysine isopeptide (Lys-Gly) (interchain with G-Cter in SUMO2) linkage. 2 consecutive C2H2-type zinc fingers follow at residues 553 to 575 (LHCN…QRIH) and 581 to 604 (YKCT…KLHH). Residue Lys-609 forms a Glycyl lysine isopeptide (Lys-Gly) (interchain with G-Cter in SUMO2) linkage. 2 consecutive C2H2-type zinc fingers follow at residues 634-656 (FPCQ…QRIH) and 662-686 (YQCS…RTQH). A Glycyl lysine isopeptide (Lys-Gly) (interchain with G-Cter in SUMO2) cross-link involves residue Lys-691. 4 consecutive C2H2-type zinc fingers follow at residues 718–740 (NKCK…ERVH), 746–768 (YQCR…QRKH), 796–818 (FWCQ…KGIH), and 824–846 (FKCN…QRIH). Residue Lys-929 forms a Glycyl lysine isopeptide (Lys-Gly) (interchain with G-Cter in SUMO2) linkage. 2 consecutive C2H2-type zinc fingers follow at residues 933–955 (HKCS…KRCH) and 961–983 (FKCI…MKNH).

The protein belongs to the krueppel C2H2-type zinc-finger protein family.

It is found in the nucleus. Functionally, transcription regulator required to maintain maternal and paternal gene imprinting, a process by which gene expression is restricted in a parent of origin-specific manner by epigenetic modification of genomic DNA and chromatin, including DNA methylation. Acts by controlling DNA methylation during the earliest multicellular stages of development at multiple imprinting control regions (ICRs). Acts together with ZFP57, but ZFP57 plays the predominant role in imprinting maintenance. In contrast, ZNF445 seems to be the major factor in human early embryonic imprinting maintenance. The chain is Zinc finger protein 445 (Znf445) from Mus musculus (Mouse).